Consider the following 86-residue polypeptide: MTEVETIIKTVLKTGGYRLGSKSTLKSLRNGEAKAVIVASNCPEEVLEKIKSYDVKILVYNGTNMELGALCGKPFSVAAMAITEEI.

This sequence belongs to the eukaryotic ribosomal protein eL30 family.

The chain is Large ribosomal subunit protein eL30 (rpl30e) from Archaeoglobus fulgidus (strain ATCC 49558 / DSM 4304 / JCM 9628 / NBRC 100126 / VC-16).